The sequence spans 318 residues: Ribose-phosphate pyrophosphokinase 2 (318 aa).

Residue 96-101 (RQDKKD) coordinates ATP. Residues aspartate 128, histidine 130, aspartate 139, and aspartate 143 each coordinate Mg(2+). Histidine 130 contributes to the ATP binding site. The binding of phosphoribosylpyrophosphate stretch occupies residues 212–227 (KDRVAILVDDMADTCG).

The protein belongs to the ribose-phosphate pyrophosphokinase family. As to quaternary structure, homodimer. The active form is probably a hexamer composed of 3 homodimers. Requires Mg(2+) as cofactor.

It carries out the reaction D-ribose 5-phosphate + ATP = 5-phospho-alpha-D-ribose 1-diphosphate + AMP + H(+). The protein operates within metabolic intermediate biosynthesis; 5-phospho-alpha-D-ribose 1-diphosphate biosynthesis; 5-phospho-alpha-D-ribose 1-diphosphate from D-ribose 5-phosphate (route I): step 1/1. With respect to regulation, activated by magnesium and inorganic phosphate. Catalyzes the synthesis of phosphoribosylpyrophosphate (PRPP) that is essential for nucleotide synthesis. The sequence is that of Ribose-phosphate pyrophosphokinase 2 (Prps2) from Rattus norvegicus (Rat).